Here is a 710-residue protein sequence, read N- to C-terminus: uncharacterized protein (710 aa).

Coiled-coil stretches lie at residues 273–298 (LYRQ…MEEG) and 477–528 (RYEK…VADT).

This is an uncharacterized protein from Coxiella burnetii (strain RSA 493 / Nine Mile phase I).